A 692-amino-acid polypeptide reads, in one-letter code: Elongation factor G (692 aa).

One can recognise a tr-type G domain in the interval 8–282 (ENTRNIGIMA…GVVDYLPSPV (275 aa)). Residues 17–24 (AHIDAGKT), 81–85 (DTPGH), and 135–138 (NKMD) each bind GTP.

It belongs to the TRAFAC class translation factor GTPase superfamily. Classic translation factor GTPase family. EF-G/EF-2 subfamily.

It localises to the cytoplasm. In terms of biological role, catalyzes the GTP-dependent ribosomal translocation step during translation elongation. During this step, the ribosome changes from the pre-translocational (PRE) to the post-translocational (POST) state as the newly formed A-site-bound peptidyl-tRNA and P-site-bound deacylated tRNA move to the P and E sites, respectively. Catalyzes the coordinated movement of the two tRNA molecules, the mRNA and conformational changes in the ribosome. This Anoxybacillus flavithermus (strain DSM 21510 / WK1) protein is Elongation factor G.